The chain runs to 463 residues: Argininosuccinate lyase (463 aa).

S27, N115, and T161 together coordinate 2-(N(omega)-L-arginino)succinate. The active-site Proton acceptor is the H162. The active-site Proton donor is the S283. Residues N291, Y323, Q328, and K331 each contribute to the 2-(N(omega)-L-arginino)succinate site.

This sequence belongs to the lyase 1 family. Argininosuccinate lyase subfamily. As to quaternary structure, homotetramer.

The enzyme catalyses 2-(N(omega)-L-arginino)succinate = fumarate + L-arginine. It functions in the pathway amino-acid biosynthesis; L-arginine biosynthesis; L-arginine from L-ornithine and carbamoyl phosphate: step 3/3. This Saccharomyces paradoxus (Yeast) protein is Argininosuccinate lyase (ARG4).